The chain runs to 164 residues: Urease subunit beta (164 aa).

Composition is skewed to polar residues over residues 1–10 (MSTKTNSTKA) and 20–30 (TNRGTKSSAGY). The interval 1 to 30 (MSTKTNSTKATSEKTDSLKTNRGTKSSAGY) is disordered.

This sequence belongs to the urease beta subunit family. Heterotrimer of UreA (gamma), UreB (beta) and UreC (alpha) subunits. Three heterotrimers associate to form the active enzyme.

It is found in the cytoplasm. It carries out the reaction urea + 2 H2O + H(+) = hydrogencarbonate + 2 NH4(+). It functions in the pathway nitrogen metabolism; urea degradation; CO(2) and NH(3) from urea (urease route): step 1/1. Functionally, expression of the urease operon increases the likelihood of bacterial survival by contributing to acid resistance in vitro and in vivo in BALB/c mice. Y.enterocolitica enters the body via an oral path and must survive the acidic stomach before being able to colonize the intestinal mucosa. The protein is Urease subunit beta of Yersinia enterocolitica.